We begin with the raw amino-acid sequence, 112 residues long: Urease subunit gamma (112 aa).

This sequence belongs to the urease gamma subunit family. In terms of assembly, heterotrimer of UreA (gamma), UreB (beta) and UreC (alpha) subunits. Three heterotrimers associate to form the active enzyme.

The protein localises to the cytoplasm. The catalysed reaction is urea + 2 H2O + H(+) = hydrogencarbonate + 2 NH4(+). It functions in the pathway nitrogen metabolism; urea degradation; CO(2) and NH(3) from urea (urease route): step 1/1. This Gloeothece citriformis (strain PCC 7424) (Cyanothece sp. (strain PCC 7424)) protein is Urease subunit gamma.